The following is a 526-amino-acid chain: Outer capsid protein VP5 (526 aa).

The tract at residues 1-42 is involved in membrane permeabilization; that stretch reads MGKIIKSLSRFGKKVGNALTSNTAKKIYNTIGKAAERFAESE.

Belongs to the orbivirus VP5 family.

It is found in the virion. VP5 protein is one of the two proteins (with VP2) which constitute the virus particle outer capsid. Acts as a membrane permeabilization protein that mediates release of viral particles from endosomal compartments into the cytoplasm. Permeabilization activity is probably negatively regulated by VP2 and is triggered by endosomal degradation of VP2 and exposure to low pH. The sequence is that of Outer capsid protein VP5 (Segment-6) from Bluetongue virus 13 (isolate USA) (BTV 13).